The primary structure comprises 226 residues: Probable proteasome subunit beta type-7 (226 aa).

This sequence belongs to the peptidase T1B family. The 26S proteasome consists of a 20S proteasome core and two 19S regulatory subunits. The 20S proteasome core is composed of 28 subunits that are arranged in four stacked rings, resulting in a barrel-shaped structure. The two end rings are each formed by seven alpha subunits, and the two central rings are each formed by seven beta subunits. The catalytic chamber with the active sites is on the inside of the barrel.

The protein resides in the cytoplasm. It localises to the nucleus. Non-catalytic component of the proteasome which degrades poly-ubiquitinated proteins in the cytoplasm and in the nucleus. It is essential for the regulated turnover of proteins and for the removal of misfolded proteins. The proteasome is a multicatalytic proteinase complex that is characterized by its ability to cleave peptides with Arg, Phe, Tyr, Leu, and Glu adjacent to the leaving group at neutral or slightly basic pH. It has an ATP-dependent proteolytic activity. This Encephalitozoon cuniculi (strain GB-M1) (Microsporidian parasite) protein is Probable proteasome subunit beta type-7 (PRE4).